The following is a 508-amino-acid chain: MQDFLEFQSISKGYPGVQALSEVSFSVRKGAVHGLMGENGAGKSTLIRVLSGDQAADTGEIRINGEPQHYRSVRDAFNAGVIVIHQELQLVPELTVAENLWLGRFPGKAGVIDRRQLIRVVSDRLAEIGIDVDPEAKVASLSIGERQMVEIAKAVMTDARVIALDEPTSSLSSRESEILFALIDRLRSNGTVILYVSHRLDEIFRLCNSLTVLRDGRLAAHHPDISKVGREQIIAEMVGREISNIWGWRARTLGAARLTVERVSGANLPQPISFTVRAGEILGFFGLIGAGRSEMARLVYGADRRRQGKVLVDGLAVPADSPRLSIRAGVVLCPEDRKFDGIVQGRSIEENMAISSRRHFSPFGVVDKGKEAELAERFIAKLRVRTPSRHQDIVNLSGGNQQKVILGRWLSEEGVKVLLIDEPTRGIDVGAKSEIYEILYELAAQGMAIVVISSELPEVMGIADRILVMCEGRIAAEIDRSDFDEHRILAAALPDASATTATLPEQVS.

2 consecutive ABC transporter domains span residues L5–R240 and A250–A496. G37 to S44 provides a ligand contact to ATP.

The protein belongs to the ABC transporter superfamily. Arabinose importer (TC 3.A.1.2.2) family. In terms of assembly, the complex is composed of two ATP-binding proteins (AraG), two transmembrane proteins (AraH) and a solute-binding protein (AraF).

The protein resides in the cell inner membrane. It carries out the reaction L-arabinose(out) + ATP + H2O = L-arabinose(in) + ADP + phosphate + H(+). Part of the ABC transporter complex AraFGH involved in arabinose import. Responsible for energy coupling to the transport system. This is Arabinose import ATP-binding protein AraG from Rhizobium meliloti (strain 1021) (Ensifer meliloti).